The chain runs to 61 residues: Pleurocidin-like peptide WF3 (61 aa).

Residues 1 to 22 (MKFTATFLVLSLVVLMAEPGEC) form the signal peptide. Positions 48–61 (YDEQQELNKRAVDE) are excised as a propeptide.

This sequence belongs to the pleurocidin family.

It localises to the secreted. Antimicrobial peptide. The polypeptide is Pleurocidin-like peptide WF3 (ple3) (Pseudopleuronectes americanus (Winter flounder)).